Reading from the N-terminus, the 554-residue chain is Glutamine--tRNA ligase (554 aa).

A 'HIGH' region motif is present at residues proline 34–histidine 44. ATP-binding positions include glutamate 35–asparagine 37 and histidine 41–serine 47. 2 residues coordinate L-glutamine: aspartate 67 and tyrosine 212. ATP is bound by residues threonine 231, arginine 261–leucine 262, and methionine 269–lysine 271. Positions valine 268 to arginine 272 match the 'KMSKS' region motif. Residues threonine 317 to glutamate 324 are interaction with tRNA.

It belongs to the class-I aminoacyl-tRNA synthetase family. As to quaternary structure, monomer.

It is found in the cytoplasm. It carries out the reaction tRNA(Gln) + L-glutamine + ATP = L-glutaminyl-tRNA(Gln) + AMP + diphosphate. In Escherichia coli O17:K52:H18 (strain UMN026 / ExPEC), this protein is Glutamine--tRNA ligase.